A 576-amino-acid chain; its full sequence is Eukaryotic translation initiation factor 3 subunit D (576 aa).

Positions 103-176 (DSTKTRFGRG…KDYDKPQRNR (74 aa)) are disordered. The span at 110-122 (GRGGLARGRGQRG) shows a compositional bias: gly residues. The segment covering 165–176 (GWKDYDKPQRNR) has biased composition (basic and acidic residues). The segment at 304–318 (TLDMVTVNENAADAP) is RNA gate.

The protein belongs to the eIF-3 subunit D family. In terms of assembly, component of the eukaryotic translation initiation factor 3 (eIF-3) complex.

It localises to the cytoplasm. MRNA cap-binding component of the eukaryotic translation initiation factor 3 (eIF-3) complex, which is involved in protein synthesis of a specialized repertoire of mRNAs and, together with other initiation factors, stimulates binding of mRNA and methionyl-tRNAi to the 40S ribosome. The eIF-3 complex specifically targets and initiates translation of a subset of mRNAs involved in cell proliferation. In the eIF-3 complex, eif3d specifically recognizes and binds the 7-methylguanosine cap of a subset of mRNAs. This Botryotinia fuckeliana (strain B05.10) (Noble rot fungus) protein is Eukaryotic translation initiation factor 3 subunit D.